The primary structure comprises 308 residues: Probable GTP 3',8-cyclase (308 aa).

Positions 4-222 (RFGRPLEDLR…KKLIRKKHFR (219 aa)) constitute a Radical SAM core domain. Arg-13 contacts GTP. Residues Cys-20, Cys-24, and Cys-27 each coordinate [4Fe-4S] cluster. Lys-60 is a binding site for GTP. Gly-64 is a binding site for S-adenosyl-L-methionine. GTP is bound at residue Thr-90. An S-adenosyl-L-methionine-binding site is contributed by Ser-114. Lys-151 is a binding site for GTP. 2 residues coordinate [4Fe-4S] cluster: Cys-245 and Cys-248. 250–252 (RIR) provides a ligand contact to GTP. Cys-262 contributes to the [4Fe-4S] cluster binding site.

Belongs to the radical SAM superfamily. MoaA family. The cofactor is [4Fe-4S] cluster.

It carries out the reaction GTP + AH2 + S-adenosyl-L-methionine = (8S)-3',8-cyclo-7,8-dihydroguanosine 5'-triphosphate + 5'-deoxyadenosine + L-methionine + A + H(+). The protein operates within cofactor biosynthesis; molybdopterin biosynthesis. In terms of biological role, catalyzes the cyclization of GTP to (8S)-3',8-cyclo-7,8-dihydroguanosine 5'-triphosphate. The sequence is that of Probable GTP 3',8-cyclase from Saccharolobus solfataricus (strain ATCC 35092 / DSM 1617 / JCM 11322 / P2) (Sulfolobus solfataricus).